The sequence spans 686 residues: Cation channel sperm-associated protein 1 (686 aa).

A compositionally biased stretch (basic and acidic residues) spans 1-15 (MDQSSRRDESYHETH). 4 disordered regions span residues 1-57 (MDQS…QQPY), 97-177 (TLPN…NRDH), 207-271 (DHHH…KSTA), and 289-318 (QSRESLRESASLSEGEDHVQKRKKAQRAHK). At 1–351 (MDQSSRRDES…QMILSLTQSL (351 aa)) the chain is on the cytoplasmic side. The segment covering 25-35 (SHPHPHPHPTL) has biased composition (basic residues). Over residues 128–142 (DPNHHPHQDDPHRPS) the composition is skewed to basic and acidic residues. Residues 147-160 (HPSSTGSHQGTTHQ) show a composition bias toward polar residues. Composition is skewed to basic residues over residues 211–229 (EGHHAHSHHGEHPHHKEQR) and 235–244 (HMHHHIHHRS). Positions 245–271 (PSASQLSHKSHSTLATSPSHVGSKSTA) are enriched in polar residues. A compositionally biased stretch (basic residues) spans 308–318 (QKRKKAQRAHK). The helical transmembrane segment at 352 to 373 (GFETFIFIVVCLNTVILVAQTF) threads the bilayer. The Extracellular portion of the chain corresponds to 374–382 (TELEIRGEW). Residues 383 to 404 (YFMVLDSIFLSIYVLEAVLKLI) form a helical membrane-spanning segment. Over 405–412 (ALGLEYFY) the chain is Cytoplasmic. A helical transmembrane segment spans residues 413–435 (DPWNNLDFFIMVMAVLDFVLLQI). Over 436 to 446 (NSLSYSFYNHS) the chain is Extracellular. The chain crosses the membrane as a helical span at residues 447-469 (LFRILKVFKSMRALRAIRVLRRL). The Cytoplasmic portion of the chain corresponds to 470–487 (SILTSLHEVAGTLSGSLP). A helical membrane pass occupies residues 488 to 510 (SITAILTLMFTCLFLFSVVLRAL). Residues 511–521 (FQDSDPKRFQN) lie on the Extracellular side of the membrane. Positions 522–534 (IFTTLFTLFTMLT) form an intramembrane region, helical; Pore-forming. Over 535-551 (LDDWSLIYIDNRAQGAW) the chain is Extracellular. Residues 552–577 (YIIPILMIYIVIQYFIFLNLVIAVLV) form a helical membrane-spanning segment. Residues 578–686 (DNFQMALLKG…FEAGDDDYGK (109 aa)) lie on the Cytoplasmic side of the membrane.

It belongs to the cation channel sperm-associated (TC 1.A.1.19) family. Component of the CatSper complex or CatSpermasome composed of the core pore-forming members CATSPER1, CATSPER2, CATSPER3 and CATSPER4 as well as auxiliary members CATSPERB, CATSPERG2, CATSPERD, CATSPERE, CATSPERZ, C2CD6/CATSPERT, SLCO6C1, TMEM249, TMEM262 and EFCAB9. HSPA1 may be an additional auxiliary complex member. The core complex members CATSPER1, CATSPER2, CATSPER3 and CATSPER4 form a heterotetrameric channel. The auxiliary CATSPERB, CATSPERG2, CATSPERD and CATSPERE subunits form a pavilion-like structure over the pore which stabilizes the complex through interactions with CATSPER4, CATSPER3, CATSPER1 and CATSPER2 respectively. SLCO6C1 interacts with CATSPERE, and TMEM262/CATSPERH interacts with CATSPERB, further stabilizing the complex. C2CD6/CATSPERT interacts at least with CATSPERD and is required for targeting the CatSper complex in the flagellar membrane. Interacts with Ca(v)3.3/CACNA1I, leading to suppression of T-type calcium channel activity. As to expression, testis-specific.

It localises to the cell projection. It is found in the cilium. Its subcellular location is the flagellum membrane. The catalysed reaction is Ca(2+)(in) = Ca(2+)(out). Its activity is regulated as follows. Activated by intracellular alkalinization. In contrast to the human ortholog, not activated by progesterone. In terms of biological role, pore-forming subunit of the CatSper complex, a sperm-specific voltage-gated calcium channel that plays a central role in sperm cell hyperactivation. Controls calcium entry to mediate the hyperactivated motility, a step needed for sperm motility which is essential late in the preparation of sperm for fertilization. The sequence is that of Cation channel sperm-associated protein 1 (Catsper1) from Mus musculus (Mouse).